Consider the following 89-residue polypeptide: MKLTCVPIVAMLFLMACQLITADYSREKHGYSAEKSSDKIQDSFYSKLTKRCTDEGGDCDPGNHNCCRGSCLVLQHKAVCGILYTMVSR.

Positions 1-22 are cleaved as a signal peptide; the sequence is MKLTCVPIVAMLFLMACQLITA. Residues 23–50 constitute a propeptide that is removed on maturation; it reads DYSREKHGYSAEKSSDKIQDSFYSKLTK. 3 disulfides stabilise this stretch: cysteine 52–cysteine 67, cysteine 59–cysteine 71, and cysteine 66–cysteine 80.

It belongs to the conotoxin O1 superfamily. Expressed by the venom duct.

It localises to the secreted. The chain is Conotoxin Lt6.4 from Conus litteratus (Lettered cone).